A 40-amino-acid chain; its full sequence is Photosystem II reaction center protein J (40 aa).

A helical transmembrane segment spans residues 8–28 (IPLWIIGTVAGIPVIGLIGIF).

Belongs to the PsbJ family. As to quaternary structure, PSII is composed of 1 copy each of membrane proteins PsbA, PsbB, PsbC, PsbD, PsbE, PsbF, PsbH, PsbI, PsbJ, PsbK, PsbL, PsbM, PsbT, PsbX, PsbY, PsbZ, Psb30/Ycf12, at least 3 peripheral proteins of the oxygen-evolving complex and a large number of cofactors. It forms dimeric complexes.

It localises to the plastid. Its subcellular location is the chloroplast thylakoid membrane. Its function is as follows. One of the components of the core complex of photosystem II (PSII). PSII is a light-driven water:plastoquinone oxidoreductase that uses light energy to abstract electrons from H(2)O, generating O(2) and a proton gradient subsequently used for ATP formation. It consists of a core antenna complex that captures photons, and an electron transfer chain that converts photonic excitation into a charge separation. This is Photosystem II reaction center protein J from Pelargonium hortorum (Common geranium).